Here is a 128-residue protein sequence, read N- to C-terminus: Modulator protein MzrA (128 aa).

The Cytoplasmic segment spans residues Met1 to Val13. The chain crosses the membrane as a helical span at residues Leu14 to Phe34. Topologically, residues Arg35–Gly128 are periplasmic.

The protein belongs to the MzrA family. Interacts with EnvZ.

It localises to the cell inner membrane. Functionally, modulates the activity of the EnvZ/OmpR two-component regulatory system, probably by directly modulating EnvZ enzymatic activity and increasing stability of phosphorylated OmpR. The protein is Modulator protein MzrA of Erwinia billingiae (strain Eb661).